Reading from the N-terminus, the 366-residue chain is MITLQRTPLFDVYAKYGGKTIDFGGWELPVQFSSIKEEHEAVRTAAGLFDVSHMGEVEVTGADSLAFLQRVVTNDVSTLKVGGAQYTAMCYENGGTVDDLLIYKRGEEDYLLVINASNIEKDYEWLASHVIGDTKVVNVSNEIAQLAIQGPKAEGILQKVVSEDLKEIKFFKFKNDVLVDGIPALVSRTGYTGEDGFEIYCKSEDAIKIWEKLLEVGEEDSLKPCGLGARDTLRFEATLPLYGQELSKDITPIEAGIGFAVKTNKEADFFGKEVLKEYKENGAPRKLVGIEVIERGIPRTHYPVYVGEEKIGEVTSGTQSPTLKKSIGLALIDVKYAAIDTEVEIEIRKKRVKAVVVPTPFYKRSK.

The protein belongs to the GcvT family. The glycine cleavage system is composed of four proteins: P, T, L and H.

The catalysed reaction is N(6)-[(R)-S(8)-aminomethyldihydrolipoyl]-L-lysyl-[protein] + (6S)-5,6,7,8-tetrahydrofolate = N(6)-[(R)-dihydrolipoyl]-L-lysyl-[protein] + (6R)-5,10-methylene-5,6,7,8-tetrahydrofolate + NH4(+). In terms of biological role, the glycine cleavage system catalyzes the degradation of glycine. The protein is Aminomethyltransferase of Bacillus cytotoxicus (strain DSM 22905 / CIP 110041 / 391-98 / NVH 391-98).